Consider the following 329-residue polypeptide: Dapdiamide synthesis protein DdaC (329 aa).

The cofactor is Fe(2+).

Its pathway is antibiotic biosynthesis. In terms of biological role, involved in dapdiamide antibiotics biosynthesis. Catalyzes the alpha-ketoglutarate-dependent epoxidation of the covalently bound N-beta-fumaramoyl-DAP-S-DdaD to generate N-beta-epoxysuccinamoyl-DAP in thioester linkage to DdaD. This Enterobacter agglomerans (Erwinia herbicola) protein is Dapdiamide synthesis protein DdaC.